The sequence spans 361 residues: P2Y purinoceptor 4 (361 aa).

The disordered stretch occupies residues 1–20; that stretch reads MTSAESLLFTSLGPSPSSGD. Over 1 to 30 the chain is Extracellular; the sequence is MTSAESLLFTSLGPSPSSGDGDCRFNEEFK. A helical membrane pass occupies residues 31 to 58; the sequence is FILLPMSYAVVFVLGLALNAPTLWLFLF. Residues 59-68 lie on the Cytoplasmic side of the membrane; that stretch reads RLRPWDATAT. The chain crosses the membrane as a helical span at residues 69 to 91; sequence YMFHLALSDTLYVLSLPTLVYYY. Residues 92–108 are Extracellular-facing; that stretch reads AARNHWPFGTGLCKFVR. A disulfide bridge links C104 with C181. The helical transmembrane segment at 109–127 threads the bilayer; that stretch reads FLFYWNLYCSVLFLTCISV. Residues 128–149 are Cytoplasmic-facing; the sequence is HRYLGICHPLRAIRWGRPRFAS. The chain crosses the membrane as a helical span at residues 150–170; the sequence is LLCLGVWLVVAGCLVPNLFFV. Residues 171 to 192 lie on the Extracellular side of the membrane; the sequence is TTNANGTTILCHDTTLPEEFDH. The N-linked (GlcNAc...) asparagine glycan is linked to N175. The chain crosses the membrane as a helical span at residues 193 to 218; it reads YVYFSSAVMVLLFGLPFLITLVCYGL. Residues 219-242 lie on the Cytoplasmic side of the membrane; sequence MARRLYRPLPGAGQSSSRLRSLRT. A helical transmembrane segment spans residues 243 to 265; it reads IAVVLTVFAVCFVPFHITRTIYY. The Extracellular segment spans residues 266 to 283; it reads QARLLQADCHVLNIVNVV. Residues 284-305 form a helical membrane-spanning segment; sequence YKVTRPLASANSCLDPVLYLFT. Topologically, residues 306–361 are cytoplasmic; it reads GDKYRNQLQQLCRGSKPKPRTAASSLALVTLHEESISRWADTHQDSTFSAYEGDRL.

This sequence belongs to the G-protein coupled receptor 1 family. In terms of processing, phosphorylation of Ser-329 and Ser-330 is a key step in agonist-dependent desensitization and loss of surface P2RY4. This phosphorylation does not involve PKC, nor other calcium-activated kinases. Widely expressed at low levels. In brain, higher expression in the pineal gland and ventricular system.

The protein localises to the cell membrane. In terms of biological role, receptor for ATP and UTP coupled to G-proteins that activate a phosphatidylinositol-calcium second messenger system. Not activated by ADP or UDP. The sequence is that of P2Y purinoceptor 4 (P2ry4) from Rattus norvegicus (Rat).